Here is a 420-residue protein sequence, read N- to C-terminus: Serine--tRNA ligase (420 aa).

229–231 is a binding site for L-serine; sequence TAE. 260-262 is a binding site for ATP; the sequence is RAE. Glutamate 283 lines the L-serine pocket. 347-350 is a binding site for ATP; that stretch reads EISS. Serine 382 provides a ligand contact to L-serine.

The protein belongs to the class-II aminoacyl-tRNA synthetase family. Type-1 seryl-tRNA synthetase subfamily. In terms of assembly, homodimer. The tRNA molecule binds across the dimer.

Its subcellular location is the cytoplasm. The enzyme catalyses tRNA(Ser) + L-serine + ATP = L-seryl-tRNA(Ser) + AMP + diphosphate + H(+). It catalyses the reaction tRNA(Sec) + L-serine + ATP = L-seryl-tRNA(Sec) + AMP + diphosphate + H(+). It functions in the pathway aminoacyl-tRNA biosynthesis; selenocysteinyl-tRNA(Sec) biosynthesis; L-seryl-tRNA(Sec) from L-serine and tRNA(Sec): step 1/1. Catalyzes the attachment of serine to tRNA(Ser). Is also able to aminoacylate tRNA(Sec) with serine, to form the misacylated tRNA L-seryl-tRNA(Sec), which will be further converted into selenocysteinyl-tRNA(Sec). The chain is Serine--tRNA ligase from Caldicellulosiruptor saccharolyticus (strain ATCC 43494 / DSM 8903 / Tp8T 6331).